The following is a 488-amino-acid chain: N-succinylglutamate 5-semialdehyde dehydrogenase (488 aa).

Residue 221–226 (GSSRTG) coordinates NAD(+). Residues Glu244 and Cys278 contribute to the active site.

The protein belongs to the aldehyde dehydrogenase family. AstD subfamily.

The enzyme catalyses N-succinyl-L-glutamate 5-semialdehyde + NAD(+) + H2O = N-succinyl-L-glutamate + NADH + 2 H(+). It functions in the pathway amino-acid degradation; L-arginine degradation via AST pathway; L-glutamate and succinate from L-arginine: step 4/5. Its function is as follows. Catalyzes the NAD-dependent reduction of succinylglutamate semialdehyde into succinylglutamate. This Pseudomonas syringae pv. syringae (strain B728a) protein is N-succinylglutamate 5-semialdehyde dehydrogenase.